The chain runs to 180 residues: Acireductone dioxygenase (180 aa).

Residues H97, H99, E103, and H141 each contribute to the Fe(2+) site. Ni(2+) contacts are provided by H97, H99, E103, and H141.

It belongs to the acireductone dioxygenase (ARD) family. As to quaternary structure, monomer. Requires Fe(2+) as cofactor. It depends on Ni(2+) as a cofactor.

It catalyses the reaction 1,2-dihydroxy-5-(methylsulfanyl)pent-1-en-3-one + O2 = 3-(methylsulfanyl)propanoate + CO + formate + 2 H(+). The catalysed reaction is 1,2-dihydroxy-5-(methylsulfanyl)pent-1-en-3-one + O2 = 4-methylsulfanyl-2-oxobutanoate + formate + 2 H(+). Its pathway is amino-acid biosynthesis; L-methionine biosynthesis via salvage pathway; L-methionine from S-methyl-5-thio-alpha-D-ribose 1-phosphate: step 5/6. In terms of biological role, catalyzes 2 different reactions between oxygen and the acireductone 1,2-dihydroxy-3-keto-5-methylthiopentene (DHK-MTPene) depending upon the metal bound in the active site. Fe-containing acireductone dioxygenase (Fe-ARD) produces formate and 2-keto-4-methylthiobutyrate (KMTB), the alpha-ketoacid precursor of methionine in the methionine recycle pathway. Ni-containing acireductone dioxygenase (Ni-ARD) produces methylthiopropionate, carbon monoxide and formate, and does not lie on the methionine recycle pathway. This chain is Acireductone dioxygenase, found in Yersinia pseudotuberculosis serotype O:1b (strain IP 31758).